A 224-amino-acid chain; its full sequence is Ribosomal RNA small subunit methyltransferase G (224 aa).

Residues glycine 89, phenylalanine 94, 140–141, and arginine 153 contribute to the S-adenosyl-L-methionine site; that span reads AE.

This sequence belongs to the methyltransferase superfamily. RNA methyltransferase RsmG family.

It localises to the cytoplasm. Functionally, specifically methylates the N7 position of a guanine in 16S rRNA. This Bacteroides fragilis (strain YCH46) protein is Ribosomal RNA small subunit methyltransferase G.